The following is a 439-amino-acid chain: 23S rRNA (uracil(1939)-C(5))-methyltransferase RlmD (439 aa).

In terms of domain architecture, TRAM spans 1–54 (MTAPVLIESLDQEGRGVAHAEGKVIFIEGALPGEVVTYNAYRRKPSFELAQVGQ). [4Fe-4S] cluster is bound by residues cysteine 67, cysteine 73, cysteine 76, and cysteine 155. Glutamine 264, phenylalanine 293, asparagine 298, glutamate 314, asparagine 342, and aspartate 363 together coordinate S-adenosyl-L-methionine. Cysteine 391 (nucleophile) is an active-site residue.

It belongs to the class I-like SAM-binding methyltransferase superfamily. RNA M5U methyltransferase family. RlmD subfamily.

It carries out the reaction uridine(1939) in 23S rRNA + S-adenosyl-L-methionine = 5-methyluridine(1939) in 23S rRNA + S-adenosyl-L-homocysteine + H(+). Catalyzes the formation of 5-methyl-uridine at position 1939 (m5U1939) in 23S rRNA. The polypeptide is 23S rRNA (uracil(1939)-C(5))-methyltransferase RlmD (Nitrosospira multiformis (strain ATCC 25196 / NCIMB 11849 / C 71)).